The sequence spans 310 residues: Ribosomal RNA small subunit methyltransferase H (310 aa).

S-adenosyl-L-methionine-binding positions include 32–34, aspartate 52, phenylalanine 79, aspartate 100, and glutamine 107; that span reads GGH.

This sequence belongs to the methyltransferase superfamily. RsmH family.

It is found in the cytoplasm. It catalyses the reaction cytidine(1402) in 16S rRNA + S-adenosyl-L-methionine = N(4)-methylcytidine(1402) in 16S rRNA + S-adenosyl-L-homocysteine + H(+). Specifically methylates the N4 position of cytidine in position 1402 (C1402) of 16S rRNA. This Bacillus anthracis (strain A0248) protein is Ribosomal RNA small subunit methyltransferase H.